Consider the following 264-residue polypeptide: Ion-translocating oxidoreductase complex subunit B (264 aa).

Residues 5–25 traverse the membrane as a helical segment; sequence LINSIAVLAGLGFAVGVMLVI. The region spanning 33–92 is the 4Fe-4S domain; the sequence is DSNPLIDDVASLLPGANCGGCGFAGCAACAEAIVEQGAPVNSCPVGGFEVAKQIGALLGQ. Residues Cys50, Cys53, Cys58, Cys75, Cys138, Cys142, Cys148, Cys152, Cys172, Cys175, Cys178, Cys182, Cys217, Cys220, Cys223, Cys227, Cys246, Cys249, Cys252, and Cys256 each contribute to the [4Fe-4S] cluster site. 4Fe-4S ferredoxin-type domains lie at 127 to 162, 163 to 192, 207 to 236, and 237 to 264; these read VALM…MGED, GFPV…FARD, KDVK…RVTE, and FLAE…IELR.

This sequence belongs to the 4Fe4S bacterial-type ferredoxin family. RnfB subfamily. As to quaternary structure, the Rnf complex is probably composed of eight subunits, including RnfA, RnfB, RnfC, RnfD, RnfE and RnfG. [4Fe-4S] cluster is required as a cofactor.

It localises to the cell membrane. Functionally, part of a membrane-bound complex that couples electron transfer with translocation of ions across the membrane. Catalyzes Na(+) transport, most probably coupled to electron transfer from reduced ferredoxin to methanophenazine and heterodisulfide reductase. Involved in heterodisulfide reduction during methanogenesis from acetate. This is Ion-translocating oxidoreductase complex subunit B from Methanosarcina acetivorans (strain ATCC 35395 / DSM 2834 / JCM 12185 / C2A).